The sequence spans 638 residues: CTTNBP2 N-terminal-like protein (638 aa).

Positions 87–284 form a coiled coil; that stretch reads MKQCKNMQER…KDLEAAQQHR (198 aa). 4 disordered regions span residues 280 to 303, 360 to 430, 463 to 490, and 514 to 621; these read AQQH…TATE, RELT…PCSS, RHKF…LSPT, and NQGP…CSPS. Residue Ser285 is modified to Phosphoserine. Polar residues predominate over residues 360 to 371; sequence RELTSDSSTENQ. Composition is skewed to low complexity over residues 401 to 430 and 467 to 477; these read TMPS…PCSS and QSQADQDQQAS. Ser481, Ser488, Ser522, Ser526, Ser559, Ser562, and Ser567 each carry phosphoserine. The segment covering 514-528 has biased composition (polar residues); it reads NQGPIKPVSPNSSPF. Phosphothreonine occurs at positions 569 and 589. The segment covering 589–620 has biased composition (polar residues); sequence TPSQSATTPVTKTHSQASSLAATEDLASSCSP. Ser591 carries the post-translational modification Phosphoserine.

In terms of assembly, interacts with CTTN/cortactin; this interaction may redistribute CTTN to stress fibers. May form homomers. Associates with the core of STRIPAK complexes composed of PP2A catalytic and scaffolding subunits, the striatins (PP2A regulatory subunits), the striatin-associated proteins MOB4, STRIP1 and STRIP2, PDCD10 and members of the STE20 kinases, such as STK24 and STK26. Predominantly expressed in skin, also detectable in spleen and lung (at protein level). Very low levels, if any, in brain (at protein level).

It is found in the cell projection. The protein resides in the lamellipodium. Its subcellular location is the cytoplasm. It localises to the cytoskeleton. The protein localises to the stress fiber. Functionally, regulates lamellipodial actin dynamics in a CTTN-dependent manner. Associates with core striatin-interacting phosphatase and kinase (STRIPAK) complex to form CTTNBP2NL-STRIPAK complexes. STRIPAK complexes have critical roles in protein (de)phosphorylation and are regulators of multiple signaling pathways including Hippo, MAPK, nuclear receptor and cytoskeleton remodeling. Different types of STRIPAK complexes are involved in a variety of biological processes such as cell growth, differentiation, apoptosis, metabolism and immune regulation. The chain is CTTNBP2 N-terminal-like protein (Cttnbp2nl) from Mus musculus (Mouse).